Here is a 380-residue protein sequence, read N- to C-terminus: 3-dehydroquinate synthase (380 aa).

NAD(+)-binding positions include 68–73 (PGEPNK), 102–106 (GTVLD), 126–127 (TT), lysine 139, and lysine 148. Zn(2+)-binding residues include glutamate 181, histidine 243, and histidine 259.

Belongs to the sugar phosphate cyclases superfamily. Dehydroquinate synthase family. NAD(+) serves as cofactor. Requires Co(2+) as cofactor. The cofactor is Zn(2+).

It localises to the cytoplasm. The enzyme catalyses 7-phospho-2-dehydro-3-deoxy-D-arabino-heptonate = 3-dehydroquinate + phosphate. It functions in the pathway metabolic intermediate biosynthesis; chorismate biosynthesis; chorismate from D-erythrose 4-phosphate and phosphoenolpyruvate: step 2/7. Catalyzes the conversion of 3-deoxy-D-arabino-heptulosonate 7-phosphate (DAHP) to dehydroquinate (DHQ). In Chlamydia pneumoniae (Chlamydophila pneumoniae), this protein is 3-dehydroquinate synthase (aroB).